We begin with the raw amino-acid sequence, 292 residues long: N-acetylneuraminate lyase (292 aa).

Residues Ser47 and Thr48 each coordinate aceneuramate. Residue Tyr136 is the Proton donor of the active site. Lys164 acts as the Schiff-base intermediate with substrate in catalysis. Thr166, Gly188, Asp190, Glu191, and Ser207 together coordinate aceneuramate.

This sequence belongs to the DapA family. NanA subfamily. In terms of assembly, homotetramer.

It is found in the cytoplasm. The enzyme catalyses aceneuramate = aldehydo-N-acetyl-D-mannosamine + pyruvate. It participates in amino-sugar metabolism; N-acetylneuraminate degradation; D-fructose 6-phosphate from N-acetylneuraminate: step 1/5. Catalyzes the reversible aldol cleavage of N-acetylneuraminic acid (sialic acid; Neu5Ac) to form pyruvate and N-acetylmannosamine (ManNAc) via a Schiff base intermediate. The polypeptide is N-acetylneuraminate lyase (Actinobacillus pleuropneumoniae serotype 3 (strain JL03)).